We begin with the raw amino-acid sequence, 139 residues long: Succinate dehydrogenase assembly factor 2, mitochondrial (139 aa).

Residues 1 to 28 constitute a mitochondrion transit peptide; it reads MLRKTNLSNITTLLRSARCMNRMPQLRF.

It belongs to the SDHAF2 family. Interacts with the flavoprotein subunit within the SDH catalytic dimer.

Its subcellular location is the mitochondrion. It localises to the mitochondrion matrix. In terms of biological role, plays an essential role in the assembly of succinate dehydrogenase (SDH), an enzyme complex (also referred to as respiratory complex II) that is a component of both the tricarboxylic acid (TCA) cycle and the mitochondrial electron transport chain, and which couples the oxidation of succinate to fumarate with the reduction of ubiquinone (coenzyme Q) to ubiquinol. Required for flavinylation (covalent attachment of FAD) of the flavoprotein subunit of the SDH catalytic dimer. In Schizosaccharomyces pombe (strain 972 / ATCC 24843) (Fission yeast), this protein is Succinate dehydrogenase assembly factor 2, mitochondrial.